The following is a 151-amino-acid chain: Small ribosomal subunit protein uS11A (151 aa).

The segment at 131 to 151 is disordered; it reads DVTPIPSDSTRRKGGRRGRRL. A compositionally biased stretch (basic residues) spans 142-151; that stretch reads RKGGRRGRRL.

Belongs to the universal ribosomal protein uS11 family.

The polypeptide is Small ribosomal subunit protein uS11A (Drosophila melanogaster (Fruit fly)).